The primary structure comprises 335 residues: Phosphate acyltransferase (335 aa).

This sequence belongs to the PlsX family. Homodimer. Probably interacts with PlsY.

The protein resides in the cytoplasm. It carries out the reaction a fatty acyl-[ACP] + phosphate = an acyl phosphate + holo-[ACP]. It participates in lipid metabolism; phospholipid metabolism. In terms of biological role, catalyzes the reversible formation of acyl-phosphate (acyl-PO(4)) from acyl-[acyl-carrier-protein] (acyl-ACP). This enzyme utilizes acyl-ACP as fatty acyl donor, but not acyl-CoA. The sequence is that of Phosphate acyltransferase from Streptococcus pyogenes serotype M28 (strain MGAS6180).